A 114-amino-acid chain; its full sequence is C-X-C motif chemokine 5 (114 aa).

The N-terminal stretch at 1-36 (MSLLSSRAARVPGPSSSLCALLVLLLLLTQPGPIAS) is a signal peptide. Cystine bridges form between Cys-49/Cys-75 and Cys-51/Cys-91.

Belongs to the intercrine alpha (chemokine CxC) family. Monomer. Homodimer. N-terminal processed forms ENA-78(8-78) and ENA-78(9-78) are produced by proteolytic cleavage after secretion from peripheral blood monocytes.

The protein resides in the secreted. Its function is as follows. Involved in neutrophil activation. In vitro, ENA-78(8-78) and ENA-78(9-78) show a threefold higher chemotactic activity for neutrophil granulocytes. The sequence is that of C-X-C motif chemokine 5 (CXCL5) from Homo sapiens (Human).